A 78-amino-acid chain; its full sequence is Probable [Fe-S]-dependent transcriptional repressor (78 aa).

Iron-sulfur cluster contacts are provided by C56, C61, C64, and C70.

This sequence belongs to the FeoC family.

Functionally, may function as a transcriptional regulator that controls feoABC expression. The chain is Probable [Fe-S]-dependent transcriptional repressor from Escherichia coli O7:K1 (strain IAI39 / ExPEC).